The sequence spans 258 residues: Trans-aconitate 2-methyltransferase (258 aa).

This sequence belongs to the methyltransferase superfamily. Tam family.

It is found in the cytoplasm. The enzyme catalyses trans-aconitate + S-adenosyl-L-methionine = (E)-3-(methoxycarbonyl)pent-2-enedioate + S-adenosyl-L-homocysteine. In terms of biological role, catalyzes the S-adenosylmethionine monomethyl esterification of trans-aconitate. This Deinococcus radiodurans (strain ATCC 13939 / DSM 20539 / JCM 16871 / CCUG 27074 / LMG 4051 / NBRC 15346 / NCIMB 9279 / VKM B-1422 / R1) protein is Trans-aconitate 2-methyltransferase.